The sequence spans 330 residues: Lipoyl synthase (330 aa).

C77, C82, C88, C103, C107, C110, and S317 together coordinate [4Fe-4S] cluster. Residues 89–306 enclose the Radical SAM core domain; it reads FNHGTATFMI…RSEAEKMGFE (218 aa).

The protein belongs to the radical SAM superfamily. Lipoyl synthase family. Requires [4Fe-4S] cluster as cofactor.

The protein localises to the cytoplasm. It carries out the reaction [[Fe-S] cluster scaffold protein carrying a second [4Fe-4S](2+) cluster] + N(6)-octanoyl-L-lysyl-[protein] + 2 oxidized [2Fe-2S]-[ferredoxin] + 2 S-adenosyl-L-methionine + 4 H(+) = [[Fe-S] cluster scaffold protein] + N(6)-[(R)-dihydrolipoyl]-L-lysyl-[protein] + 4 Fe(3+) + 2 hydrogen sulfide + 2 5'-deoxyadenosine + 2 L-methionine + 2 reduced [2Fe-2S]-[ferredoxin]. It functions in the pathway protein modification; protein lipoylation via endogenous pathway; protein N(6)-(lipoyl)lysine from octanoyl-[acyl-carrier-protein]: step 2/2. Its function is as follows. Catalyzes the radical-mediated insertion of two sulfur atoms into the C-6 and C-8 positions of the octanoyl moiety bound to the lipoyl domains of lipoate-dependent enzymes, thereby converting the octanoylated domains into lipoylated derivatives. The polypeptide is Lipoyl synthase (Haemophilus ducreyi (strain 35000HP / ATCC 700724)).